The primary structure comprises 342 residues: Ribosomal RNA small subunit methyltransferase C (342 aa).

The protein belongs to the methyltransferase superfamily. RsmC family. Monomer.

The protein resides in the cytoplasm. It catalyses the reaction guanosine(1207) in 16S rRNA + S-adenosyl-L-methionine = N(2)-methylguanosine(1207) in 16S rRNA + S-adenosyl-L-homocysteine + H(+). In terms of biological role, specifically methylates the guanine in position 1207 of 16S rRNA in the 30S particle. The sequence is that of Ribosomal RNA small subunit methyltransferase C from Hahella chejuensis (strain KCTC 2396).